The primary structure comprises 194 residues: Cathelicidin-related peptide isoform 3 (194 aa).

Residues 1–22 (MQGFFWKTWLVLAVCGTPASLA) form the signal peptide. The propeptide occupies 23 to 164 (HRPLSYGEAL…DQPKRVKRFK (142 aa)). Cystine bridges form between Cys-79-Cys-90 and Cys-101-Cys-118. The segment covering 125–145 (EEEEEEEEEEQKAEAENDEEV) has biased composition (acidic residues). The tract at residues 125–156 (EEEEEEEEEEQKAEAENDEEVEKEKGDEEKDQ) is disordered. Positions 146–156 (EKEKGDEEKDQ) are enriched in basic and acidic residues.

It belongs to the cathelicidin family. Expressed by the venom gland.

Its subcellular location is the secreted. It localises to the target cell membrane. Potent antimicrobial peptide against Gram-negative and Gram-positive bacteria. Adopts an amphipathic alpha helical conformation, that may allow to partition into the target membrane. Low hemolytic activities have been observed on mammalian cells. The protein is Cathelicidin-related peptide isoform 3 of Crotalus durissus cascavella (Northeastern Brazilian rattlesnake).